The chain runs to 622 residues: WD repeat-containing protein 70 (622 aa).

Basic and acidic residues predominate over residues Arg-36 to Leu-55. Residues Arg-36–Ser-141 are disordered. Residues Ser-67–Glu-84 are compositionally biased toward low complexity. The segment covering Ser-120 to Asp-132 has biased composition (acidic residues). 7 WD repeats span residues His-148–Gln-187, Cys-195–Lys-236, Gly-249–Gly-289, Gly-298–Phe-337, Thr-344–Asn-383, Gly-387–Glu-434, and Val-437–Ala-476. Positions Arg-508–Glu-533 are enriched in basic and acidic residues. Disordered regions lie at residues Arg-508–Gly-549 and Ala-602–Ile-622. A compositionally biased stretch (gly residues) spans Pro-539–Gly-549. The segment covering Val-604–Glu-614 has biased composition (acidic residues).

Belongs to the WD repeat GAD-1 family.

The sequence is that of WD repeat-containing protein 70 (wdr70) from Xenopus laevis (African clawed frog).